We begin with the raw amino-acid sequence, 180 residues long: NADH-quinone oxidoreductase subunit I (180 aa).

2 4Fe-4S ferredoxin-type domains span residues 50-80 and 90-119; these read LTRDPDGEERCVACNLCAVACPVGCISLQKA and EFFRINFSRCIFCGLCEEACPTTAIQLTPD. Cys-60, Cys-63, Cys-66, Cys-70, Cys-99, Cys-102, Cys-105, and Cys-109 together coordinate [4Fe-4S] cluster.

This sequence belongs to the complex I 23 kDa subunit family. In terms of assembly, NDH-1 is composed of 13 different subunits. Subunits NuoA, H, J, K, L, M, N constitute the membrane sector of the complex. Requires [4Fe-4S] cluster as cofactor.

It localises to the cell inner membrane. The catalysed reaction is a quinone + NADH + 5 H(+)(in) = a quinol + NAD(+) + 4 H(+)(out). In terms of biological role, NDH-1 shuttles electrons from NADH, via FMN and iron-sulfur (Fe-S) centers, to quinones in the respiratory chain. The immediate electron acceptor for the enzyme in this species is believed to be ubiquinone. Couples the redox reaction to proton translocation (for every two electrons transferred, four hydrogen ions are translocated across the cytoplasmic membrane), and thus conserves the redox energy in a proton gradient. This is NADH-quinone oxidoreductase subunit I from Shigella boydii serotype 4 (strain Sb227).